A 454-amino-acid polypeptide reads, in one-letter code: Carbamoyl phosphate synthase arginine-specific small chain (454 aa).

The transit peptide at 1 to 29 directs the protein to the mitochondrion; sequence MMFSRFFKAVPARAPAFSSPLPVYQARTM. Positions 219–406 constitute a Glutamine amidotransferase type-1 domain; it reads HVAVLDCGVK…IDSVKKYKNS (188 aa). The active-site Nucleophile is the Cys295. Residues His379 and Glu381 contribute to the active site.

This sequence belongs to the CarA family. Heterodimer composed of 2 chains; the small (or glutamine) chain promotes the hydrolysis of glutamine to ammonia, which is used by the large (or ammonia) chain to synthesize carbamoyl phosphate.

It is found in the mitochondrion matrix. It carries out the reaction hydrogencarbonate + L-glutamine + 2 ATP + H2O = carbamoyl phosphate + L-glutamate + 2 ADP + phosphate + 2 H(+). It catalyses the reaction L-glutamine + H2O = L-glutamate + NH4(+). Its pathway is amino-acid biosynthesis; L-arginine biosynthesis; carbamoyl phosphate from bicarbonate: step 1/1. In terms of biological role, small subunit of the arginine-specific carbamoyl phosphate synthase (CPSase). CPSase catalyzes the formation of carbamoyl phosphate from the ammonia moiety of glutamine, carbonate, and phosphate donated by ATP, the first step of the arginine biosynthetic pathway. The small subunit (glutamine amidotransferase) binds and cleaves glutamine to supply the large subunit with the substrate ammonia. The sequence is that of Carbamoyl phosphate synthase arginine-specific small chain (cpa-1) from Emericella nidulans (strain FGSC A4 / ATCC 38163 / CBS 112.46 / NRRL 194 / M139) (Aspergillus nidulans).